An 88-amino-acid chain; its full sequence is YcgL domain-containing protein CGSHiGG_01115 (88 aa).

The region spanning 1–85 (MLCAIYKSKK…QDDGLFNSLS (85 aa)) is the YcgL domain.

The sequence is that of YcgL domain-containing protein CGSHiGG_01115 from Haemophilus influenzae (strain PittGG).